A 918-amino-acid chain; its full sequence is Protein translocase subunit SecA (918 aa).

ATP-binding positions include glutamine 87, 105–109 (GEGKT), and aspartate 494. A compositionally biased stretch (basic and acidic residues) spans 863–883 (KQDDTSPKEYKKIGQEQRAEV). The interval 863–918 (KQDDTSPKEYKKIGQEQRAEVDMFGNELKSNKTKPQVSSTTSSGGGSERRSSRRKK) is disordered.

It belongs to the SecA family. In terms of assembly, monomer and homodimer. Part of the essential Sec protein translocation apparatus which comprises SecA, SecYEG and auxiliary proteins SecDF. Other proteins may also be involved.

The protein localises to the cell inner membrane. It is found in the cytoplasm. It catalyses the reaction ATP + H2O + cellular proteinSide 1 = ADP + phosphate + cellular proteinSide 2.. Its function is as follows. Part of the Sec protein translocase complex. Interacts with the SecYEG preprotein conducting channel. Has a central role in coupling the hydrolysis of ATP to the transfer of proteins into and across the cell membrane, serving as an ATP-driven molecular motor driving the stepwise translocation of polypeptide chains across the membrane. The protein is Protein translocase subunit SecA of Leptospira biflexa serovar Patoc (strain Patoc 1 / Ames).